The sequence spans 392 residues: LL-diaminopimelate aminotransferase (392 aa).

Y13 and G38 together coordinate substrate. Residues Y67, 102–103, Y127, N177, Y208, and 236–238 contribute to the pyridoxal 5'-phosphate site; these read SK and SCS. Substrate-binding residues include K103, Y127, and N177. An N6-(pyridoxal phosphate)lysine modification is found at K239. A pyridoxal 5'-phosphate-binding site is contributed by R247. R366 provides a ligand contact to substrate.

Belongs to the class-I pyridoxal-phosphate-dependent aminotransferase family. LL-diaminopimelate aminotransferase subfamily. In terms of assembly, homodimer. Requires pyridoxal 5'-phosphate as cofactor.

It catalyses the reaction (2S,6S)-2,6-diaminopimelate + 2-oxoglutarate = (S)-2,3,4,5-tetrahydrodipicolinate + L-glutamate + H2O + H(+). The protein operates within amino-acid biosynthesis; L-lysine biosynthesis via DAP pathway; LL-2,6-diaminopimelate from (S)-tetrahydrodipicolinate (aminotransferase route): step 1/1. In terms of biological role, involved in the synthesis of meso-diaminopimelate (m-DAP or DL-DAP), required for both lysine and peptidoglycan biosynthesis. Catalyzes the direct conversion of tetrahydrodipicolinate to LL-diaminopimelate. Can also use m-DAP instead of LL-DAP as the amino-group donor. The sequence is that of LL-diaminopimelate aminotransferase from Gloeobacter violaceus (strain ATCC 29082 / PCC 7421).